The following is an 829-amino-acid chain: MENDNYDVEEQGCSVFNGKHGYFARSCCVVFILIICVIFVFSVIFTFMQNPINLNSDNGFNQTSGNTSSLEATTLKPKFSSLMTTTRRFTFEQLFSGKQFLVDYYDYIWLPDGSFVQMNDDFTIRKQMKKIPLGSSVAEPFFNNGEYVKALSSNMKYAYGSKKVNELWRHSAEYLYHIVKINNKTVSTEQWHVGPEENSLIQAFYWNPNASSNDFVYVHNYNLYYQKDPEKPDGAIQLTVGGSTFNRFGLANWLYEEEILEASSAVWWSPSGRYVSYLRFDDREVNRIFLPKYTDDDSYVEYFELPYPKAGVQNNTLVTQYIWDSENHKIVETAPPNELSAANGDYYVLTNKWITMPRNGSDLGEERLVTVWANRDQNHVYFSLCNEQDCVMALSFQFSIDNRQLWVSPKDVRGVFPTETGFLTVLPHKHDDGNIYNHVAHVELDGTGTGKITKWIGENFDVILVLGYSSKIDALTFSAYGDGVGEFSTYIVREAMYSNKKTTLQKVTDQFEDCKTLGSQSADPTGQRIVVQCEKPFDNTRLYLVDVVDTTKKIMLEGGTKAVIPFDVPNMKFGKLKLPSGIDGHYMMLTPANLLDGAKIPLLLDIYGGPDSKQVFQKTPTAHAIQIVSQYDIAYARIDVRGTGGRGWDVKEAVYRKLGDAEVVDTLDMIRAFINTFGFIDEDRIAVMGWSYGGFLTSKIAIKDQGELVKCAISIAPVTDFKYYDSAYTERYLGQPAENLQGYINTNVIPHARNVTNVKYLLAHGERDDNVHYQNSARWSEALQQNGIHFTQLVYANEAHSLSHKLFHLYGEVQRFLMNDCFKSNLDLL.

At 1-27 the chain is on the cytoplasmic side; that stretch reads MENDNYDVEEQGCSVFNGKHGYFARSC. The chain crosses the membrane as a helical; Signal-anchor for type II membrane protein span at residues 28–48; the sequence is CVVFILIICVIFVFSVIFTFM. Over 49–829 the chain is Extracellular; sequence QNPINLNSDN…DCFKSNLDLL (781 aa). N-linked (GlcNAc...) asparagine glycosylation is found at asparagine 61, asparagine 66, asparagine 183, asparagine 209, asparagine 314, and asparagine 359. Cysteine 514 and cysteine 533 are joined by a disulfide. The active-site Charge relay system is serine 691. A disulfide bridge connects residues cysteine 711 and cysteine 821. A glycan (N-linked (GlcNAc...) asparagine) is linked at asparagine 754. Active-site charge relay system residues include aspartate 768 and histidine 800.

This sequence belongs to the peptidase S9B family. DPPIV subfamily.

The protein resides in the cell membrane. Functionally, removes N-terminal dipeptides sequentially from polypeptides. Essential for control of distal tip cell migration. The chain is Dipeptidyl peptidase family member 2 (dpf-2) from Caenorhabditis elegans.